We begin with the raw amino-acid sequence, 311 residues long: Aspartate carbamoyltransferase catalytic subunit (311 aa).

Residues Arg58 and Thr59 each contribute to the carbamoyl phosphate site. Residue Lys86 participates in L-aspartate binding. Arg108, His136, and Gln139 together coordinate carbamoyl phosphate. L-aspartate is bound by residues Arg169 and Arg224. Residues Gly265 and Pro266 each coordinate carbamoyl phosphate.

It belongs to the aspartate/ornithine carbamoyltransferase superfamily. ATCase family. As to quaternary structure, heterododecamer (2C3:3R2) of six catalytic PyrB chains organized as two trimers (C3), and six regulatory PyrI chains organized as three dimers (R2).

The catalysed reaction is carbamoyl phosphate + L-aspartate = N-carbamoyl-L-aspartate + phosphate + H(+). It participates in pyrimidine metabolism; UMP biosynthesis via de novo pathway; (S)-dihydroorotate from bicarbonate: step 2/3. In terms of biological role, catalyzes the condensation of carbamoyl phosphate and aspartate to form carbamoyl aspartate and inorganic phosphate, the committed step in the de novo pyrimidine nucleotide biosynthesis pathway. The protein is Aspartate carbamoyltransferase catalytic subunit of Geotalea uraniireducens (strain Rf4) (Geobacter uraniireducens).